The primary structure comprises 564 residues: Urease subunit alpha (564 aa).

The 439-residue stretch at 126-564 (GGIDTHIHFI…LPMAQRYFLF (439 aa)) folds into the Urease domain. Residues His131, His133, and Lys214 each contribute to the Ni(2+) site. An N6-carboxylysine modification is found at Lys214. Residue His216 participates in substrate binding. Positions 243 and 269 each coordinate Ni(2+). His317 (proton donor) is an active-site residue. A Ni(2+)-binding site is contributed by Asp357.

The protein belongs to the metallo-dependent hydrolases superfamily. Urease alpha subunit family. In terms of assembly, heterotrimer of UreA (gamma), UreB (beta) and UreC (alpha) subunits. Three heterotrimers associate to form the active enzyme. Requires Ni cation as cofactor. Post-translationally, carboxylation allows a single lysine to coordinate two nickel ions.

Its subcellular location is the cytoplasm. It catalyses the reaction urea + 2 H2O + H(+) = hydrogencarbonate + 2 NH4(+). The protein operates within nitrogen metabolism; urea degradation; CO(2) and NH(3) from urea (urease route): step 1/1. The protein is Urease subunit alpha of Burkholderia pseudomallei (strain 1710b).